The chain runs to 182 residues: NADH-quinone oxidoreductase subunit I (182 aa).

4Fe-4S ferredoxin-type domains follow at residues 52–82 (LTRDPDGEERCVACNLCAVACPVGCISLQKA) and 92–121 (EFFRINFSRCIFCGLCEEACPTTAIQLTPD). 8 residues coordinate [4Fe-4S] cluster: C62, C65, C68, C72, C101, C104, C107, and C111.

The protein belongs to the complex I 23 kDa subunit family. NDH-1 is composed of 13 different subunits. Subunits NuoA, H, J, K, L, M, N constitute the membrane sector of the complex. [4Fe-4S] cluster serves as cofactor.

The protein resides in the cell inner membrane. It carries out the reaction a quinone + NADH + 5 H(+)(in) = a quinol + NAD(+) + 4 H(+)(out). In terms of biological role, NDH-1 shuttles electrons from NADH, via FMN and iron-sulfur (Fe-S) centers, to quinones in the respiratory chain. The immediate electron acceptor for the enzyme in this species is believed to be ubiquinone. Couples the redox reaction to proton translocation (for every two electrons transferred, four hydrogen ions are translocated across the cytoplasmic membrane), and thus conserves the redox energy in a proton gradient. This Pseudomonas aeruginosa (strain LESB58) protein is NADH-quinone oxidoreductase subunit I.